We begin with the raw amino-acid sequence, 162 residues long: Caveolin-2 (162 aa).

Over 1–86 (MGLETEKADV…FEISKYVMYK (86 aa)) the chain is Cytoplasmic. At Tyr-19 the chain carries Phosphotyrosine. A phosphoserine mark is found at Ser-20 and Ser-36. Residues 87–107 (FLTVFLAIPLAFVAGILFATL) constitute an intramembrane region (helical). The Cytoplasmic segment spans residues 108 to 162 (SCLHIWIIMPFVKTCLMVLPSVQTIWKSVTDVIIAPLCTSVGRSFSSISLQLSHD).

It belongs to the caveolin family. In terms of assembly, homodimer. Caveolin-1 and -2 colocalize and form a stable hetero-oligomeric complex.

Its subcellular location is the golgi apparatus membrane. It localises to the cell membrane. It is found in the membrane. The protein localises to the caveola. May act as a scaffolding protein within caveolar membranes. Interacts directly with G-protein alpha subunits and can functionally regulate their activity. Caveolin-2 may function as an accessory protein in conjunction with caveolin-1. The chain is Caveolin-2 (CAV2) from Microcebus murinus (Gray mouse lemur).